A 563-amino-acid polypeptide reads, in one-letter code: Proline--tRNA ligase (563 aa).

Belongs to the class-II aminoacyl-tRNA synthetase family. ProS type 1 subfamily. As to quaternary structure, homodimer.

It is found in the cytoplasm. It carries out the reaction tRNA(Pro) + L-proline + ATP = L-prolyl-tRNA(Pro) + AMP + diphosphate. Functionally, catalyzes the attachment of proline to tRNA(Pro) in a two-step reaction: proline is first activated by ATP to form Pro-AMP and then transferred to the acceptor end of tRNA(Pro). As ProRS can inadvertently accommodate and process non-cognate amino acids such as alanine and cysteine, to avoid such errors it has two additional distinct editing activities against alanine. One activity is designated as 'pretransfer' editing and involves the tRNA(Pro)-independent hydrolysis of activated Ala-AMP. The other activity is designated 'posttransfer' editing and involves deacylation of mischarged Ala-tRNA(Pro). The misacylated Cys-tRNA(Pro) is not edited by ProRS. The chain is Proline--tRNA ligase from Persephonella marina (strain DSM 14350 / EX-H1).